We begin with the raw amino-acid sequence, 535 residues long: Cytochrome P450 monooxygenase atE (535 aa).

Cysteine 455 provides a ligand contact to heme.

It belongs to the cytochrome P450 family. Heme serves as cofactor.

It catalyses the reaction 3-methylcatechol + AH2 + O2 = 3-methylbenzene-1,2,4-triol + A + H2O. Its pathway is secondary metabolite biosynthesis. Its function is as follows. Cytochrome P450 monooxygenase; part of the gene cluster that mediates the biosynthesis of terreic acid, a quinone epoxide inhibitor of Bruton's tyrosine kinase. The first step of the pathway is the synthesis of 6-methylsalicylic acid (6-MSA) by the 6-methylsalicylic acid synthase atX. In the biosynthesis of 6-MSA, atX utilizes one acetyl-CoA and three malonyl-CoAs as its substrates and catalyzes a series of programmed reactions including Claisen condensation, reduction, aldol cyclization, and the hydrolytic cleavage that yields 6-MSA. The 6-methylsalicylate 1-monooxygenase atA then catalyzes the decarboxylative hydroxylation of 6-MSA to 3-methylcatechol. The next step is the conversion of 3-methylcatechol to 3-methyl-1,2,4-benzenetriol by cytochrome P450 monooxygenase atE, which is enhanced by cytochrome P450 monooxygenase atG. Then, the epoxidase atD catalyzes the epoxidation and hydroxyl oxidation of 3-methyl-1,2,4-benzenetriol to terremutin. Lastly, GMC oxidoreductase atC oxidizes terremutin to terreic acid. In Aspergillus terreus (strain NIH 2624 / FGSC A1156), this protein is Cytochrome P450 monooxygenase atE.